Here is an 855-residue protein sequence, read N- to C-terminus: Pentatricopeptide repeat-containing protein At1g74750 (855 aa).

The disordered stretch occupies residues 21–40 (GSRPSAADGNSCTCAEDESG). PPR repeat units lie at residues 358–392 (DGHT…GCKP), 393–427 (NTVT…GCEP), 428–462 (DRVT…GLSP), 463–497 (DTFT…GCTP), 498–532 (NLVT…GFQP), 533–567 (DKVT…NWVP), 568–602 (DEPV…GLRP), and 603–637 (NVPT…GLHP). The Smr domain maps to 755-838 (INLHVMSEGT…NSGCFVGSGE (84 aa)).

Belongs to the PPR family. P subfamily.

The protein is Pentatricopeptide repeat-containing protein At1g74750 of Arabidopsis thaliana (Mouse-ear cress).